Reading from the N-terminus, the 198-residue chain is MLNFYNTKITVAGADEAGRGCLAGPVTAAAVILPIEFKNAVLNDSKTLNLKNRNFLKSLIEDEAITYGVAHVFMKEIDEINILNASILAMHRALQVLKFDPDHIIVDGNRFKPYQKIPHECIIKGDGKYMSIAAASILAKTYRDEFMEKIHEEFPDYNWKKNKGYPTKEHRAAIKKYGVTKYHRKSFKLLPDQLKIDF.

Residues 9-198 (ITVAGADEAG…LLPDQLKIDF (190 aa)) form the RNase H type-2 domain. A divalent metal cation is bound by residues Asp-15, Glu-16, and Asp-107.

Belongs to the RNase HII family. The cofactor is Mn(2+). Requires Mg(2+) as cofactor.

The protein localises to the cytoplasm. It carries out the reaction Endonucleolytic cleavage to 5'-phosphomonoester.. Endonuclease that specifically degrades the RNA of RNA-DNA hybrids. The chain is Ribonuclease HII from Christiangramia forsetii (strain DSM 17595 / CGMCC 1.15422 / KT0803) (Gramella forsetii).